Reading from the N-terminus, the 173-residue chain is NADH-ubiquinone oxidoreductase chain 6 (173 aa).

5 helical membrane-spanning segments follow: residues Met-1 to Ser-21, Ala-24 to Val-44, Leu-53 to Leu-73, Ser-86 to Trp-106, and Tyr-139 to Leu-159.

This sequence belongs to the complex I subunit 6 family.

It is found in the mitochondrion membrane. The enzyme catalyses a ubiquinone + NADH + 5 H(+)(in) = a ubiquinol + NAD(+) + 4 H(+)(out). Functionally, core subunit of the mitochondrial membrane respiratory chain NADH dehydrogenase (Complex I) that is believed to belong to the minimal assembly required for catalysis. Complex I functions in the transfer of electrons from NADH to the respiratory chain. The immediate electron acceptor for the enzyme is believed to be ubiquinone. The chain is NADH-ubiquinone oxidoreductase chain 6 (MT-ND6) from Formosania lacustris (Oriental stream loach).